A 330-amino-acid polypeptide reads, in one-letter code: Malate dehydrogenase (330 aa).

Position 13-19 (13-19 (GAAGQIG)) interacts with NAD(+). Substrate is bound by residues R94 and R100. NAD(+) is bound by residues N107, Q114, and 131 to 133 (VGN). Substrate-binding residues include N133 and R164. H189 serves as the catalytic Proton acceptor.

This sequence belongs to the LDH/MDH superfamily. MDH type 2 family.

It catalyses the reaction (S)-malate + NAD(+) = oxaloacetate + NADH + H(+). In terms of biological role, catalyzes the reversible oxidation of malate to oxaloacetate. The protein is Malate dehydrogenase of Deinococcus radiodurans (strain ATCC 13939 / DSM 20539 / JCM 16871 / CCUG 27074 / LMG 4051 / NBRC 15346 / NCIMB 9279 / VKM B-1422 / R1).